A 669-amino-acid chain; its full sequence is MAIVQTLPVPLEPAPEAATAPQAPVMGSVSSLISGRPCPGGPAPPRHHGPPGPTFFRQQDGLLRGGYEAQEPLCPAVPPRKAVPVTSFTYINEDFRTESPPSPSSDVEDAREQRAHNAHLRGPPPKLIPVSGKLEKNMEKILIRPTAFKPVLPKPRGAPSLPSFMGPRATGLSGSQGSLTQLFGGPASSSSSSSSSSAADKPLAFSGWASGCPSGTLSDSGRNSLSSLPTYSTGGAEPTTSSPGGHLPSHGSGRGALPGPARGVPTGPSHSDSGRSSSSKSTGSLGGRVAGGLLGSGTRASPDSSSCGERSPPPPPPPPSDEALLHCVLEGKLRDREAELQQLRDSLDENEATMCQAYEERQRHWQREREALREDCAAQAQRAQRAQQLLQLQVFQLQQEKRQLQDDFAQLLQEREQLERRCATLEREQRELGPRLEETKWEVCQKSGEISLLKQQLKESQAELVQKGSELVALRVALREARATLRVSEGRARGLQEAARARELELEACSQELQRHRQEAEQLREKAGQLDAEAAGLREPPVPPATADPFLLAESDEAKVQRAAAGVGGSLRAQVERLRVELQRERRRGEEQRDSFEGERLAWQAEKEQVIRYQKQLQHNYIQMYRRNRQLEQELQQLSLELEARELADLGLAEQAPCICLEEITATEI.

Residues 1 to 25 (MAIVQTLPVPLEPAPEAATAPQAPV) are compositionally biased toward low complexity. 4 disordered regions span residues 1 to 56 (MAIV…PTFF), 92 to 131 (NEDFRTESPPSPSSDVEDAREQRAHNAHLRGPPPKLIPVS), 150 to 201 (PVLP…AADK), and 215 to 323 (GTLS…SDEA). The required for centrosomal localization stretch occupies residues 1–332 (MAIVQTLPVP…ALLHCVLEGK (332 aa)). Polar residues predominate over residues 172-181 (LSGSQGSLTQ). Over residues 187 to 199 (ASSSSSSSSSSAA) the composition is skewed to low complexity. A compositionally biased stretch (polar residues) spans 215–233 (GTLSDSGRNSLSSLPTYST). 2 stretches are compositionally biased toward low complexity: residues 241–251 (SSPGGHLPSHG) and 267–283 (GPSHSDSGRSSSSKSTG). Ser249 carries the post-translational modification Phosphoserine. Over residues 284 to 295 (SLGGRVAGGLLG) the composition is skewed to gly residues. A Phosphoserine modification is found at Ser296. The segment covering 298–308 (TRASPDSSSCG) has biased composition (polar residues). A compositionally biased stretch (pro residues) spans 311–320 (SPPPPPPPPS). Residues 328 to 649 (VLEGKLRDRE…LELEARELAD (322 aa)) are a coiled coil. Residues 447–669 (SGEISLLKQQ…CLEEITATEI (223 aa)) are sufficient for interaction with CTNNB1. The interval 450–669 (ISLLKQQLKE…CLEEITATEI (220 aa)) is sufficient for interaction with KATNB1 and for inhibition of katanin-mediated microtubule severing. Residue Ser570 is modified to Phosphoserine. The short motif at 631-640 (LEQELQQLSL) is the Nuclear export signal element.

It belongs to the LZTS2 family. Interacts with KATNB1. Also interacts with CTNNB1, gamma-tubulin and KIF23. In terms of tissue distribution, highly expressed in prostate and testis, and at slightly lower levels in spleen, thymus, uterus, small intestine and colon.

It localises to the cytoplasm. Its subcellular location is the cytoskeleton. The protein localises to the microtubule organizing center. The protein resides in the centrosome. Its function is as follows. Negative regulator of katanin-mediated microtubule severing and release from the centrosome. Required for central spindle formation and the completion of cytokinesis. May negatively regulate axonal outgrowth by preventing the formation of microtubule bundles that are necessary for transport within the elongating axon. Negative regulator of the Wnt signaling pathway. Represses beta-catenin-mediated transcriptional activation by promoting the nuclear exclusion of beta-catenin. The polypeptide is Leucine zipper putative tumor suppressor 2 (Homo sapiens (Human)).